The chain runs to 98 residues: Integration host factor subunit beta (98 aa).

The protein belongs to the bacterial histone-like protein family. As to quaternary structure, heterodimer of an alpha and a beta chain.

Functionally, this protein is one of the two subunits of integration host factor, a specific DNA-binding protein that functions in genetic recombination as well as in transcriptional and translational control. The protein is Integration host factor subunit beta of Teredinibacter turnerae (strain ATCC 39867 / T7901).